The primary structure comprises 315 residues: Aspartate carbamoyltransferase catalytic subunit (315 aa).

Positions 55 and 56 each coordinate carbamoyl phosphate. Lys-83 is an L-aspartate binding site. Carbamoyl phosphate is bound by residues Arg-105, His-138, and Gln-141. The L-aspartate site is built by Arg-171 and Arg-225. Residues Gly-266 and Pro-267 each contribute to the carbamoyl phosphate site.

This sequence belongs to the aspartate/ornithine carbamoyltransferase superfamily. ATCase family. As to quaternary structure, heterododecamer (2C3:3R2) of six catalytic PyrB chains organized as two trimers (C3), and six regulatory PyrI chains organized as three dimers (R2).

The enzyme catalyses carbamoyl phosphate + L-aspartate = N-carbamoyl-L-aspartate + phosphate + H(+). The protein operates within pyrimidine metabolism; UMP biosynthesis via de novo pathway; (S)-dihydroorotate from bicarbonate: step 2/3. Its function is as follows. Catalyzes the condensation of carbamoyl phosphate and aspartate to form carbamoyl aspartate and inorganic phosphate, the committed step in the de novo pyrimidine nucleotide biosynthesis pathway. The polypeptide is Aspartate carbamoyltransferase catalytic subunit (Mycolicibacterium vanbaalenii (strain DSM 7251 / JCM 13017 / BCRC 16820 / KCTC 9966 / NRRL B-24157 / PYR-1) (Mycobacterium vanbaalenii)).